We begin with the raw amino-acid sequence, 274 residues long: Large ribosomal subunit protein uL2 (274 aa).

Positions Gly-222 to Lys-257 are disordered.

This sequence belongs to the universal ribosomal protein uL2 family. As to quaternary structure, part of the 50S ribosomal subunit. Forms a bridge to the 30S subunit in the 70S ribosome.

One of the primary rRNA binding proteins. Required for association of the 30S and 50S subunits to form the 70S ribosome, for tRNA binding and peptide bond formation. It has been suggested to have peptidyltransferase activity; this is somewhat controversial. Makes several contacts with the 16S rRNA in the 70S ribosome. The protein is Large ribosomal subunit protein uL2 of Nitrosococcus oceani (strain ATCC 19707 / BCRC 17464 / JCM 30415 / NCIMB 11848 / C-107).